The sequence spans 858 residues: Elongation factor 2 (858 aa).

Residues A17–V362 form the tr-type G domain. Position 26 to 33 (A26 to S33) interacts with GTP. The residue at position 54 (T54) is a Phosphothreonine. T57 carries the phosphothreonine; by EEF2K modification. Residue T59 is modified to Phosphothreonine. K152 carries the post-translational modification N6-succinyllysine. GTP is bound by residues N158–D161 and S216–L218. K235 bears the N6-acetyllysine mark. K239 is modified (N6-acetyllysine; alternate). K239 is covalently cross-linked (Glycyl lysine isopeptide (Lys-Gly) (interchain with G-Cter in SUMO1); alternate). Y265 is subject to Phosphotyrosine; by CSK. Position 272 is an N6-acetyllysine; alternate (K272). At K272 the chain carries N6-succinyllysine; alternate. At K275 the chain carries N6-acetyllysine. K322 is covalently cross-linked (Glycyl lysine isopeptide (Lys-Gly) (interchain with G-Cter in SUMO)). Position 325 is a phosphoserine (S325). Residue Y373 is modified to Phosphotyrosine; by CSK. At T435 the chain carries Phosphothreonine. Residues K439 and K445 each carry the N6-acetyllysine modification. S502 bears the Phosphoserine mark. Position 525 is an N6,N6,N6-trimethyllysine; by EEF2KMT (K525). Residue K529 forms a Glycyl lysine isopeptide (Lys-Gly) (interchain with G-Cter in SUMO) linkage. N6-succinyllysine is present on K572. Position 595 is a phosphoserine; by CDK2 (S595). An N6-acetyllysine modification is found at K619. A Diphthamide modification is found at H715.

It belongs to the TRAFAC class translation factor GTPase superfamily. Classic translation factor GTPase family. EF-G/EF-2 subfamily. Binds to 80S ribosomes. Actively translating ribosomes show mutually exclusive binding of eIF5a (EIF5A or EIF5A2) and EEF2/eEF2. Interacts with SERBP1; interaction sequesters EEF2/eEF2 at the A-site of the ribosome, thereby blocking the interaction sites of the mRNA-tRNA complex, promoting ribosome stabilization and hibernation. Interacts with HABP4; interaction takes place at the A-site of hibernating ribosomes and promotes ribosome stabilization. Component of the mRNA surveillance SURF complex, at least composed of ERF1, ERF3 (ERF3A or ERF3B), EEF2, UPF1/RENT1, SMG1, SMG8 and SMG9. Interacts with RBPMS2. Diphthamide is 2-[3-carboxyamido-3-(trimethyl-ammonio)propyl]histidine. Post-translationally, phosphorylation by EF-2 kinase completely inactivates EF-2; it requires prior phosphorylation by CDK2 at Ser-595 during mitotic prometaphase. Phosphorylation by CSK promotes SUMOylation, proteolytic cleavage, and nuclear translocation if the C-terminal fragment. In terms of processing, proteolytically processed at two sites following phosphorylation by CSK. SUMOylated following phosphorylation by CSK, promotes proteolytic cleavage. Post-translationally, ISGylated.

The protein localises to the cytoplasm. Its subcellular location is the nucleus. It catalyses the reaction GTP + H2O = GDP + phosphate + H(+). Its function is as follows. Catalyzes the GTP-dependent ribosomal translocation step during translation elongation. During this step, the ribosome changes from the pre-translocational (PRE) to the post-translocational (POST) state as the newly formed A-site-bound peptidyl-tRNA and P-site-bound deacylated tRNA move to the P and E sites, respectively. Catalyzes the coordinated movement of the two tRNA molecules, the mRNA and conformational changes in the ribosome. This Rattus norvegicus (Rat) protein is Elongation factor 2 (Eef2).